A 373-amino-acid polypeptide reads, in one-letter code: Probable G-protein coupled receptor 45 (373 aa).

The Extracellular segment spans residues 1–38 (MACNSTPMGTYEHLLLNVSNTLDPGDTPLSAPLRISLA). Asparagine 17 is a glycosylation site (N-linked (GlcNAc...) asparagine). A helical membrane pass occupies residues 39-59 (IMMLLMIVVGFLGNTVVCIIV). Residues 60–75 (YQRPAMRSAINLLLAT) lie on the Cytoplasmic side of the membrane. A helical transmembrane segment spans residues 76–96 (LAFSDIMLSLCCMPFTAITLI). Residues 97–109 (TVRWHFGDHFCRL) lie on the Extracellular side of the membrane. The helical transmembrane segment at 110–130 (SATLYWFFVLEGVAILLIISV) threads the bilayer. Over 131–149 (DRFLIIVQRQDKLNPRRAK) the chain is Cytoplasmic. A helical membrane pass occupies residues 150–170 (MIIAASWVLSFCISAPSFTGW). The Extracellular segment spans residues 171-198 (TFMEVPARAPQCVLGYTEFPAERAYVVT). The helical transmembrane segment at 199–219 (LVVAVFFAPFGVMLCSYLCIL) threads the bilayer. Over 220–269 (NTVRKNAVRVHNQSDSLDLRQLTGAGLRRLRRQQQQASLDLSFKTKAFTT) the chain is Cytoplasmic. A helical membrane pass occupies residues 270–290 (ILILFVGFSLCWLPHSVYSLL). At 291 to 306 (SAFSRRFYYSASFYTT) the chain is on the extracellular side. The helical transmembrane segment at 307–327 (STCVLWLSYLKSVFNPIVYCW) threads the bilayer. Residues 328 to 373 (RIKKFREACIELLPHTFQILPKVPERIQRKIQPSTIYVCNENQSAV) are Cytoplasmic-facing.

The protein belongs to the G-protein coupled receptor 1 family. In terms of tissue distribution, brain specific.

It is found in the cell membrane. Orphan receptor. May play a role in brain function. This chain is Probable G-protein coupled receptor 45 (Gpr45), found in Mus musculus (Mouse).